The sequence spans 217 residues: Large ribosomal subunit protein uL4 (217 aa).

A disordered region spans residues 42-100; that stretch reads RAAARQGTHSTKTRGDVSGGGRKPYRQKGTGRARQGSTRAPQFTGGGVVHGPKPRDYSQ.

This sequence belongs to the universal ribosomal protein uL4 family. As to quaternary structure, part of the 50S ribosomal subunit.

Functionally, one of the primary rRNA binding proteins, this protein initially binds near the 5'-end of the 23S rRNA. It is important during the early stages of 50S assembly. It makes multiple contacts with different domains of the 23S rRNA in the assembled 50S subunit and ribosome. Forms part of the polypeptide exit tunnel. This chain is Large ribosomal subunit protein uL4, found in Mycobacterium avium (strain 104).